The following is a 173-amino-acid chain: Disulfide bond formation protein B (173 aa).

The Cytoplasmic segment spans residues 1-11; sequence MNALQWSFRAQ. The helical transmembrane segment at 12-28 threads the bilayer; sequence CLTGFLFCTGLLAYAIF. The Periplasmic portion of the chain corresponds to 29–46; sequence LQLHQGLEPCPLCIFQRI. Cys38 and Cys41 form a disulfide bridge. Residues 47–63 traverse the membrane as a helical segment; that stretch reads AFAVLGILFLIAGLYNS. Topologically, residues 64–70 are cytoplasmic; it reads SNVYTRK. Residues 71 to 88 form a helical membrane-spanning segment; sequence AYGLLIFLTAAIGTGIAG. Residues 89–145 lie on the Periplasmic side of the membrane; sequence RHVWVQLMPHNTISSCGSPLSFLSETMGPFEVFRTVLTGTSDCGNIDWRFLGLSMPM. Cys104 and Cys131 are disulfide-bonded. Residues 146–164 traverse the membrane as a helical segment; it reads WSMFWFVALALLGLLVGFK. The Cytoplasmic segment spans residues 165–173; it reads AERRKPLFS.

It belongs to the DsbB family.

It is found in the cell inner membrane. In terms of biological role, required for disulfide bond formation in some periplasmic proteins. Acts by oxidizing the DsbA protein. The protein is Disulfide bond formation protein B of Xylella fastidiosa (strain 9a5c).